Consider the following 188-residue polypeptide: Adenine phosphoribosyltransferase (188 aa).

It belongs to the purine/pyrimidine phosphoribosyltransferase family. As to quaternary structure, homodimer.

The protein resides in the cytoplasm. It catalyses the reaction AMP + diphosphate = 5-phospho-alpha-D-ribose 1-diphosphate + adenine. The protein operates within purine metabolism; AMP biosynthesis via salvage pathway; AMP from adenine: step 1/1. Its function is as follows. Catalyzes a salvage reaction resulting in the formation of AMP, that is energically less costly than de novo synthesis. The sequence is that of Adenine phosphoribosyltransferase from Neisseria meningitidis serogroup A / serotype 4A (strain DSM 15465 / Z2491).